Reading from the N-terminus, the 970-residue chain is Serine/threonine-protein kinase PLK4 (970 aa).

The Protein kinase domain occupies 12–265; sequence FKVGNLLGKG…LSSVLDHPFM (254 aa). Residues 18–26 and lysine 41 each bind ATP; that span reads LGKGSFAGV. Lysine 45 and lysine 46 each carry N6-acetyllysine. The Proton acceptor role is filled by aspartate 136. Residues 324–373 form a disordered region; it reads VFPKNKSSSDFSSSGDGNSFYTQWGNQETSNSGRGRVIQDAEERPHSRYL. Residues 327 to 343 are compositionally biased toward low complexity; it reads KNKSSSDFSSSGDGNSF. Polar residues predominate over residues 344 to 356; sequence YTQWGNQETSNSG. Residues 360-369 show a composition bias toward basic and acidic residues; it reads VIQDAEERPH. Serine 401 carries the post-translational modification Phosphoserine. The interval 498–540 is disordered; that stretch reads ISPTRDFQGHPDLQKDTSKNAWTDTKVKKNSDASDNAHSVKQP. The segment covering 504–515 has biased composition (basic and acidic residues); the sequence is FQGHPDLQKDTS. A compositionally biased stretch (polar residues) spans 530–540; the sequence is ASDNAHSVKQP. The Cryptic POLO box 1 (CPB1) domain maps to 586–699; sequence TLRSITSPLV…SRFVQLVRSK (114 aa). Serine 665 is modified (phosphoserine). A Cryptic POLO box 2 (CPB2) domain is found at 700-813; that stretch reads SPKITYFTRY…GRKPGSTSSP (114 aa). The interval 808-829 is disordered; it reads GSTSSPKALSPPPSVDSNYPTR. Phosphoserine is present on serine 817. Residues 886–964 form the POLO box domain; it reads QLLKSVFVKN…LSSILLMFSN (79 aa).

Belongs to the protein kinase superfamily. Ser/Thr protein kinase family. CDC5/Polo subfamily. In terms of assembly, homodimer. Interacts with CEP152 (via N-terminus). Interacts with CEP78; this interaction may be important for proper PLK4 localization to the centriole and PLK4-induced overduplication of centrioles. Interacts with CEP131. Interacts simultaneously with TENT5C and CEP192. Interacts with TENT5C; this interaction leads to the TENT5C recruitment in the centrosome. Interacts with CEP85; this interaction may be important in cell migration and centriole assembly. Ubiquitinated; leading to its degradation by the proteasome. Deubiquitinated by USP54; leading to PLK4 stabilization. Post-translationally, tyrosine-phosphorylated by TEC. In terms of processing, acetylation by KAT2A and KAT2B impairs kinase activity by shifting the kinase to an inactive conformation.

Its subcellular location is the cytoplasm. It is found in the cytoskeleton. The protein resides in the microtubule organizing center. The protein localises to the centrosome. It localises to the centriole. Its subcellular location is the nucleus. It is found in the nucleolus. The protein resides in the cleavage furrow. The catalysed reaction is L-seryl-[protein] + ATP = O-phospho-L-seryl-[protein] + ADP + H(+). It carries out the reaction L-threonyl-[protein] + ATP = O-phospho-L-threonyl-[protein] + ADP + H(+). Serine/threonine-protein kinase that plays a central role in centriole duplication. Able to trigger procentriole formation on the surface of the parental centriole cylinder, leading to the recruitment of centriole biogenesis proteins such as SASS6, CPAP, CCP110, CEP135 and gamma-tubulin. When overexpressed, it is able to induce centrosome amplification through the simultaneous generation of multiple procentrioles adjoining each parental centriole during S phase. Phosphorylates 'Ser-151' of FBXW5 during the G1/S transition, leading to inhibit FBXW5 ability to ubiquitinate SASS6. Its central role in centriole replication suggests a possible role in tumorigenesis, centrosome aberrations being frequently observed in tumors. Also involved in deuterosome-mediated centriole amplification in multiciliated that can generate more than 100 centrioles. Also involved in trophoblast differentiation by phosphorylating HAND1, leading to disrupt the interaction between HAND1 and MDFIC and activate HAND1. Phosphorylates CDC25C and CHEK2. Required for the recruitment of STIL to the centriole and for STIL-mediated centriole amplification. Phosphorylates CEP131 and PCM1 which is essential for proper organization and integrity of centriolar satellites. This is Serine/threonine-protein kinase PLK4 from Pongo abelii (Sumatran orangutan).